Here is a 271-residue protein sequence, read N- to C-terminus: uncharacterized protein (271 aa).

This sequence belongs to the HAD-like hydrolase superfamily.

This is an uncharacterized protein from Staphylococcus aureus (strain MRSA252).